A 92-amino-acid chain; its full sequence is Small ribosomal subunit protein uS19 (92 aa).

Belongs to the universal ribosomal protein uS19 family.

In terms of biological role, protein S19 forms a complex with S13 that binds strongly to the 16S ribosomal RNA. This is Small ribosomal subunit protein uS19 from Methylobacterium radiotolerans (strain ATCC 27329 / DSM 1819 / JCM 2831 / NBRC 15690 / NCIMB 10815 / 0-1).